A 275-amino-acid chain; its full sequence is 4-diphosphocytidyl-2-C-methyl-D-erythritol kinase (275 aa).

Residue Lys-8 is part of the active site. Position 86–96 (86–96 (PEGAGLGGGSS)) interacts with ATP. The active site involves Asp-125.

This sequence belongs to the GHMP kinase family. IspE subfamily.

It carries out the reaction 4-CDP-2-C-methyl-D-erythritol + ATP = 4-CDP-2-C-methyl-D-erythritol 2-phosphate + ADP + H(+). The protein operates within isoprenoid biosynthesis; isopentenyl diphosphate biosynthesis via DXP pathway; isopentenyl diphosphate from 1-deoxy-D-xylulose 5-phosphate: step 3/6. Its function is as follows. Catalyzes the phosphorylation of the position 2 hydroxy group of 4-diphosphocytidyl-2C-methyl-D-erythritol. In Thermus thermophilus (strain ATCC BAA-163 / DSM 7039 / HB27), this protein is 4-diphosphocytidyl-2-C-methyl-D-erythritol kinase.